The following is a 194-amino-acid chain: Methyl-CpG-binding domain protein 3-like 1 (194 aa).

The tract at residues 1 to 104 is transcription repressor; the sequence is MAKSSQRKQR…KLVPSYTGGS (104 aa).

The protein belongs to the MBD3L family. As to expression, highly expressed in testis. Detected at low levels in pancreas. Not detected in the other tissues tested.

Its subcellular location is the nucleus. Transcriptional repressor. This chain is Methyl-CpG-binding domain protein 3-like 1 (MBD3L1), found in Homo sapiens (Human).